The following is a 677-amino-acid chain: UvrABC system protein B (677 aa).

In terms of domain architecture, Helicase ATP-binding spans 24–412 (EGVLEGVPAQ…EGIVVEQVIR (389 aa)). 37–44 (GVTGSGKT) serves as a coordination point for ATP. The Beta-hairpin motif lies at 90 to 113 (YYDYYQPEAYLPSSDTYIEKDLAI). The Helicase C-terminal domain maps to 429–591 (QIDDLMEEIQ…ITPQQIKKAR (163 aa)). Residues 635-670 (EKSMERTRKLMQEAAKKLEFIEAAQYRDELLKMEDL) form the UVR domain.

It belongs to the UvrB family. As to quaternary structure, forms a heterotetramer with UvrA during the search for lesions. Interacts with UvrC in an incision complex.

It localises to the cytoplasm. Its function is as follows. The UvrABC repair system catalyzes the recognition and processing of DNA lesions. A damage recognition complex composed of 2 UvrA and 2 UvrB subunits scans DNA for abnormalities. Upon binding of the UvrA(2)B(2) complex to a putative damaged site, the DNA wraps around one UvrB monomer. DNA wrap is dependent on ATP binding by UvrB and probably causes local melting of the DNA helix, facilitating insertion of UvrB beta-hairpin between the DNA strands. Then UvrB probes one DNA strand for the presence of a lesion. If a lesion is found the UvrA subunits dissociate and the UvrB-DNA preincision complex is formed. This complex is subsequently bound by UvrC and the second UvrB is released. If no lesion is found, the DNA wraps around the other UvrB subunit that will check the other stand for damage. This is UvrABC system protein B from Bacteroides fragilis (strain YCH46).